A 60-amino-acid chain; its full sequence is Ribosome biogenesis protein Nop10 (60 aa).

Residues 37–60 (APAPFDPADPHGKYRRALKERRRL) are disordered. A compositionally biased stretch (basic residues) spans 49–60 (KYRRALKERRRL).

This sequence belongs to the NOP10 family.

Functionally, involved in ribosome biogenesis; more specifically in 18S rRNA pseudouridylation and in cleavage of pre-rRNA. The sequence is that of Ribosome biogenesis protein Nop10 from Halobacterium salinarum (strain ATCC 29341 / DSM 671 / R1).